Here is a 75-residue protein sequence, read N- to C-terminus: ORF2p protein (75 aa).

Positions Trp13 to Val18 are important for viral replication in intestinal cells. A transmembrane span lies at residues Ile23–Ile45. Residues Ala53–Leu75 form a disordered region.

It is found in the host cytoplasmic vesicle membrane. Facilitates virus release from intestinal cells in vitro, possibly through the host autophagic pathway. In Human enterovirus 71 (strain USA/BrCr/1970) (EV71), this protein is ORF2p protein.